The chain runs to 297 residues: Probable endonuclease 4 (297 aa).

The Zn(2+) site is built by His69, His110, Glu145, Asp179, His182, His214, Asp227, His229, and Glu259.

It belongs to the AP endonuclease 2 family. It depends on Zn(2+) as a cofactor.

The catalysed reaction is Endonucleolytic cleavage to 5'-phosphooligonucleotide end-products.. Functionally, endonuclease IV plays a role in DNA repair. It cleaves phosphodiester bonds at apurinic or apyrimidinic (AP) sites, generating a 3'-hydroxyl group and a 5'-terminal sugar phosphate. In Oceanobacillus iheyensis (strain DSM 14371 / CIP 107618 / JCM 11309 / KCTC 3954 / HTE831), this protein is Probable endonuclease 4.